The primary structure comprises 367 residues: MEVKSAKELKRVSKELQENFLNRWKLLNLEQDKDRLKALNEKSEDPDLWNNPEEARIVSQKKNELEKKLTPWFTIQQDILDFPDLVELTLDEKGENGIGELSMEYNRLQEKFEELELLGALKNSEDLKPAFLNIHPGAGGTESQDWAEMLLRMYIRYFEKKGYQYSLIDIQAGDGAGIKNVTLHVVGDFAFGFLKGENGIHRLVRISPFDANKRRHTSFVSVHVSPEIDDEIDIKIEEKDIRVDVYRSSGAGGQHVNTTDSAVRITHLPSGIVVACQNERSQIKNRDTAFKMLKARLYEMEQEKAKEELEKKSGEKKDIAWGSQIRSYVFHPYNLVKDHRTDHETGNVAAVMDGDIEPFILAYLKTL.

Residue Gln254 is modified to N5-methylglutamine.

This sequence belongs to the prokaryotic/mitochondrial release factor family. In terms of processing, methylated by PrmC. Methylation increases the termination efficiency of RF2.

Its subcellular location is the cytoplasm. In terms of biological role, peptide chain release factor 2 directs the termination of translation in response to the peptide chain termination codons UGA and UAA. This Leptospira borgpetersenii serovar Hardjo-bovis (strain JB197) protein is Peptide chain release factor 2.